A 142-amino-acid chain; its full sequence is Large ribosomal subunit protein uL24 (142 aa).

Polar residues predominate over residues 1–11 (MKVNPFVSSDS). The tract at residues 1–24 (MKVNPFVSSDSGKSRKAHFNAPSH) is disordered.

The protein belongs to the universal ribosomal protein uL24 family.

This Caenorhabditis elegans protein is Large ribosomal subunit protein uL24 (rpl-26).